Here is a 735-residue protein sequence, read N- to C-terminus: Phosphoribosylformylglycinamidine synthase subunit PurL (735 aa).

Histidine 49 is an active-site residue. Residues tyrosine 52 and lysine 91 each contribute to the ATP site. Glutamate 93 is a binding site for Mg(2+). Residues 94-97 (SHNH) and arginine 116 contribute to the substrate site. Residue histidine 95 is the Proton acceptor of the active site. Aspartate 117 contributes to the Mg(2+) binding site. Glutamine 240 is a substrate binding site. Aspartate 268 serves as a coordination point for Mg(2+). 312 to 314 (ESQ) lines the substrate pocket. ATP is bound by residues aspartate 493 and glycine 530. Position 531 (asparagine 531) interacts with Mg(2+). Position 533 (serine 533) interacts with substrate.

The protein belongs to the FGAMS family. As to quaternary structure, monomer. Part of the FGAM synthase complex composed of 1 PurL, 1 PurQ and 2 PurS subunits.

The protein localises to the cytoplasm. It catalyses the reaction N(2)-formyl-N(1)-(5-phospho-beta-D-ribosyl)glycinamide + L-glutamine + ATP + H2O = 2-formamido-N(1)-(5-O-phospho-beta-D-ribosyl)acetamidine + L-glutamate + ADP + phosphate + H(+). Its pathway is purine metabolism; IMP biosynthesis via de novo pathway; 5-amino-1-(5-phospho-D-ribosyl)imidazole from N(2)-formyl-N(1)-(5-phospho-D-ribosyl)glycinamide: step 1/2. In terms of biological role, part of the phosphoribosylformylglycinamidine synthase complex involved in the purines biosynthetic pathway. Catalyzes the ATP-dependent conversion of formylglycinamide ribonucleotide (FGAR) and glutamine to yield formylglycinamidine ribonucleotide (FGAM) and glutamate. The FGAM synthase complex is composed of three subunits. PurQ produces an ammonia molecule by converting glutamine to glutamate. PurL transfers the ammonia molecule to FGAR to form FGAM in an ATP-dependent manner. PurS interacts with PurQ and PurL and is thought to assist in the transfer of the ammonia molecule from PurQ to PurL. This Methylocella silvestris (strain DSM 15510 / CIP 108128 / LMG 27833 / NCIMB 13906 / BL2) protein is Phosphoribosylformylglycinamidine synthase subunit PurL.